Reading from the N-terminus, the 26-residue chain is uncharacterized protein (26 aa).

A helical membrane pass occupies residues 3–23 (IIYLILFLIVIYLLYRILDVL).

The protein localises to the membrane. This is an uncharacterized protein from Helicobacter pylori (strain J99 / ATCC 700824) (Campylobacter pylori J99).